Consider the following 258-residue polypeptide: Transcription cofactor vestigial-like protein 1 (258 aa).

Composition is skewed to polar residues over residues 55 to 65 and 74 to 87; these read PQELTPSSQSE and SMSP…SPWT. The disordered stretch occupies residues 55–93; sequence PQELTPSSQSEGVMLKNDDSMSPNQWRYSSPWTKPQPEV.

The protein belongs to the vestigial family. Interacts with TEFs.

The protein resides in the nucleus. Functionally, may act as a specific coactivator for the mammalian TEFs. The sequence is that of Transcription cofactor vestigial-like protein 1 (VGLL1) from Homo sapiens (Human).